A 153-amino-acid chain; its full sequence is Ribosome maturation factor RimP (153 aa).

This sequence belongs to the RimP family.

It is found in the cytoplasm. In terms of biological role, required for maturation of 30S ribosomal subunits. The sequence is that of Ribosome maturation factor RimP from Coxiella burnetii (strain CbuG_Q212) (Coxiella burnetii (strain Q212)).